Reading from the N-terminus, the 402-residue chain is Cytochrome b561 and DOMON domain-containing protein At4g17280 (402 aa).

Residues 1 to 31 (MSNHMSIMKFLNQILCLSLILSISMTTLSFA) form the signal peptide. One can recognise a DOMON domain in the interval 54-171 (LDSFLHYTYE…GTINTVWQDG (118 aa)). The Cytochrome b561 domain occupies 183-379 (TSGNNVRSVS…LEAFTWYVVI (197 aa)). Transmembrane regions (helical) follow at residues 218-238 (IHGILNGVSWGIMMPLGAIIA) and 250-270 (AWFYIHVFCQASAYIIGVAGW). His219, His255, and His288 together coordinate heme b. The chain crosses the membrane as a helical span at residues 290–310 (AIGIALFSLATVQVFAMFLRP). His324 serves as a coordination point for heme b. The next 2 membrane-spanning stretches (helical) occupy residues 326 to 346 (TIGYTIIILGVVNVFKGLGIL) and 359 to 379 (IIVVLAIVATLLEAFTWYVVI).

Heme b is required as a cofactor.

Its subcellular location is the membrane. In terms of biological role, may act as a catecholamine-responsive trans-membrane electron transporter. This Arabidopsis thaliana (Mouse-ear cress) protein is Cytochrome b561 and DOMON domain-containing protein At4g17280.